An 854-amino-acid chain; its full sequence is Protein asteroid (854 aa).

The disordered stretch occupies residues Ser368–Leu427. A compositionally biased stretch (basic and acidic residues) spans Asp375–Asp387. The span at Val388–Leu427 shows a compositional bias: acidic residues.

The protein belongs to the asteroid family. Expressed in the proliferative tissues of embryos and in the mitotically active tissue anterior to the morphogenetic furrow in eye imaginal disks.

In terms of biological role, may function in EGF receptor signaling. May play a role in compound eye morphogenesis. The chain is Protein asteroid (ast) from Drosophila melanogaster (Fruit fly).